We begin with the raw amino-acid sequence, 370 residues long: Cyclic AMP-responsive element-binding protein 3-like protein 4 (370 aa).

The required for transcriptional activation stretch occupies residues 1 to 55 (MELGCPELLEPPEDIFSTGSFLELGFNGPASKVPVTRGLQKSEPDDFLNLFIDPN). Topologically, residues 1 to 271 (MELGCPELLE…QTSSRAAQTS (271 aa)) are cytoplasmic. Residues 61–85 (ETSPGRDSGVSEDPGSPAQQASSSP) form a disordered region. The segment covering 76 to 85 (SPAQQASSSP) has biased composition (low complexity). One can recognise a bZIP domain in the interval 193–256 (ILKKIRRKIR…IFLMEQVRQL (64 aa)). The tract at residues 195 to 234 (KKIRRKIRNKQSAQDSRRRKKEYLDGLESRVAACSEQNQK) is basic motif. The segment at 235–256 (LQRKVQELERQNIFLMEQVRQL) is leucine-zipper. Residues 272 to 292 (TCVLILLFSLALIILPSFSPF) form a helical; Signal-anchor for type II membrane protein membrane-spanning segment. Residues 293-370 (QGQSEARPED…IRGMVHTDEM (78 aa)) lie on the Lumenal side of the membrane. Residues Asn-318 and Asn-342 are each glycosylated (N-linked (GlcNAc...) asparagine).

Belongs to the bZIP family. ATF subfamily. As to quaternary structure, binds DNA as a dimer. Forms a heterodimer with CREM isoform Tau. In terms of processing, controlled by regulated intramembrane proteolysis (RIP). Following ER stress a fragment containing the cytoplasmic transcription factor domain is released by proteolysis. The cleavage seems to be performed sequentially by site-1 and site-2 proteases (PS1 and PS2). PS1 cleavage may be suppressed by a determinant in the C-terminal region. As to expression, predominantly expressed at high levels in testis with isoform 2 being the predominant isoform. Specifically expressed in postmeiotic spermatids and accumulates in the mid/late stage (at protein level). Ubiquitously expressed at low levels.

The protein resides in the endoplasmic reticulum membrane. Its subcellular location is the cytoplasmic vesicle. It localises to the secretory vesicle. The protein localises to the acrosome inner membrane. It is found in the nucleus. In terms of biological role, transcriptional activator that may play a role in the unfolded protein response of the testis. Proposed to be involved in spermiogenesis. May be involved in regulating the maturation of sperm head nuclei. Alternatively proposed to be a paternally delivered transcription factor that may function in early zygotic gene activation. Increases the binding of CREM isoform Tau with CRE. The CREM isoform Tau-CREB3L4 heterodimer functions through CRE but not through UPRE and may recruit HIRA to CRE to regulate histone exchange. The protein is Cyclic AMP-responsive element-binding protein 3-like protein 4 (Creb3l4) of Mus musculus (Mouse).